A 523-amino-acid polypeptide reads, in one-letter code: NAD(P)H-quinone oxidoreductase subunit 2 (523 aa).

Helical transmembrane passes span 29–49 (AIAP…VDLA), 57–77 (WVPP…AQQW), 94–114 (LAIA…LISW), 123–143 (PIGE…LLCG), 147–167 (LVSV…LAGY), 182–202 (LLVG…LYGL), 221–243 (PLAA…AVPF), 255–275 (PTPV…ALAL), 291–311 (LLFT…ALAQ), 317–337 (MLAY…VCGT), 345–365 (VLYM…IILF), 389–409 (LGLS…GFFG), 424–444 (LLVV…ISVI), and 477–497 (IALV…NPLF).

The protein belongs to the complex I subunit 2 family. NDH-1 can be composed of about 15 different subunits; different subcomplexes with different compositions have been identified which probably have different functions.

Its subcellular location is the cellular thylakoid membrane. The enzyme catalyses a plastoquinone + NADH + (n+1) H(+)(in) = a plastoquinol + NAD(+) + n H(+)(out). It carries out the reaction a plastoquinone + NADPH + (n+1) H(+)(in) = a plastoquinol + NADP(+) + n H(+)(out). Its function is as follows. NDH-1 shuttles electrons from an unknown electron donor, via FMN and iron-sulfur (Fe-S) centers, to quinones in the respiratory and/or the photosynthetic chain. The immediate electron acceptor for the enzyme in this species is believed to be plastoquinone. Couples the redox reaction to proton translocation, and thus conserves the redox energy in a proton gradient. Cyanobacterial NDH-1 also plays a role in inorganic carbon-concentration. This Prochlorococcus marinus (strain MIT 9303) protein is NAD(P)H-quinone oxidoreductase subunit 2.